Consider the following 153-residue polypeptide: NADH dehydrogenase [ubiquinone] 1 beta subcomplex subunit 11, mitochondrial (153 aa).

The N-terminal 29 residues, M1–W29, are a transit peptide targeting the mitochondrion. The interval P49–D72 is disordered. The chain crosses the membrane as a helical span at residues L89 to L109.

It belongs to the complex I NDUFB11 subunit family. As to quaternary structure, complex I is composed of 45 different subunits. Interacts with BCAP31.

The protein localises to the mitochondrion inner membrane. Functionally, accessory subunit of the mitochondrial membrane respiratory chain NADH dehydrogenase (Complex I), that is believed not to be involved in catalysis. Complex I functions in the transfer of electrons from NADH to the respiratory chain. The immediate electron acceptor for the enzyme is believed to be ubiquinone. The polypeptide is NADH dehydrogenase [ubiquinone] 1 beta subcomplex subunit 11, mitochondrial (NDUFB11) (Pongo pygmaeus (Bornean orangutan)).